The following is a 508-amino-acid chain: Photosystem II CP47 reaction center protein (508 aa).

A run of 6 helical transmembrane segments spans residues Ser-21–Ser-36, Ile-101–Trp-115, Gly-140–Phe-156, Ile-203–Thr-218, Val-237–Val-252, and Cys-457–Arg-472.

Belongs to the PsbB/PsbC family. PsbB subfamily. As to quaternary structure, PSII is composed of 1 copy each of membrane proteins PsbA, PsbB, PsbC, PsbD, PsbE, PsbF, PsbH, PsbI, PsbJ, PsbK, PsbL, PsbM, PsbT, PsbX, PsbY, PsbZ, Psb30/Ycf12, at least 3 peripheral proteins of the oxygen-evolving complex and a large number of cofactors. It forms dimeric complexes. Requires Binds multiple chlorophylls. PSII binds additional chlorophylls, carotenoids and specific lipids. as cofactor.

It localises to the plastid. The protein resides in the chloroplast thylakoid membrane. Its function is as follows. One of the components of the core complex of photosystem II (PSII). It binds chlorophyll and helps catalyze the primary light-induced photochemical processes of PSII. PSII is a light-driven water:plastoquinone oxidoreductase, using light energy to abstract electrons from H(2)O, generating O(2) and a proton gradient subsequently used for ATP formation. This Chlorokybus atmophyticus (Soil alga) protein is Photosystem II CP47 reaction center protein.